The chain runs to 31 residues: M-poneritoxin-Nc3b (31 aa).

The protein belongs to the ponericin-G family. In terms of tissue distribution, expressed by the venom gland.

The protein localises to the secreted. It localises to the target cell membrane. Functionally, membrane-perturbating peptide with a few moderate activities. It is insecticidal, since it induces reversible paralysis in insects (L.cuprina) after 1 hour, but fails to kill them. It is also antiparasitic, since it moderately inhibits the larval development of the major pathogenic nematode of ruminants (H.contortus, IC(50)=23.2 uM) and reduces the motility of adult males of the other nematode B.malayi. It does not show antibacterial activity (MIC&gt;40 uM). It is not cytotoxic to HEK293 cells and does not induce hemolysis in human erythrocytes. It does not cause an increase in intracellular calcium concentration on neuronal and epithelial cell lines. In Neoponera commutata (Large hunting ant), this protein is M-poneritoxin-Nc3b.